The following is a 91-amino-acid chain: uncharacterized protein (91 aa).

3 helical membrane-spanning segments follow: residues 9 to 29 (VLWG…PFLP), 44 to 64 (LTVN…VFAW), and 71 to 91 (QFVF…CLAL).

Its subcellular location is the cell membrane. This is an uncharacterized protein from Bacillus subtilis (strain 168).